A 502-amino-acid polypeptide reads, in one-letter code: Cardiolipin synthase (502 aa).

The next 3 membrane-spanning stretches (helical) occupy residues 7-27 (VIIFVLAVAAFLFLTNDYWEG), 29-49 (LLGGLSILISCSVVFIAFVIS), and 59-79 (ITWLVVLGSFPLIGFFFYLMF). 2 consecutive PLD phosphodiesterase domains span residues 237–264 (INFRNHRKIIVIDGTIGFVGGLNIGDEY) and 415–442 (SKGFLHSKIMIVDGELASIGTANMDMRS). Residues His-242, Lys-244, Asp-249, His-420, Lys-422, and Asp-427 contribute to the active site.

This sequence belongs to the phospholipase D family. Cardiolipin synthase subfamily.

The protein resides in the cell membrane. The enzyme catalyses 2 a 1,2-diacyl-sn-glycero-3-phospho-(1'-sn-glycerol) = a cardiolipin + glycerol. Functionally, catalyzes the reversible phosphatidyl group transfer from one phosphatidylglycerol molecule to another to form cardiolipin (CL) (diphosphatidylglycerol) and glycerol. The chain is Cardiolipin synthase (cls) from Geobacillus sp. (strain WCH70).